The primary structure comprises 458 residues: ATP synthase subunit beta (458 aa).

Position 148–155 (148–155) interacts with ATP; the sequence is GGAGVGKT.

The protein belongs to the ATPase alpha/beta chains family. As to quaternary structure, F-type ATPases have 2 components, CF(1) - the catalytic core - and CF(0) - the membrane proton channel. CF(1) has five subunits: alpha(3), beta(3), gamma(1), delta(1), epsilon(1). CF(0) has three main subunits: a(1), b(2) and c(9-12). The alpha and beta chains form an alternating ring which encloses part of the gamma chain. CF(1) is attached to CF(0) by a central stalk formed by the gamma and epsilon chains, while a peripheral stalk is formed by the delta and b chains.

The protein localises to the cell inner membrane. The catalysed reaction is ATP + H2O + 4 H(+)(in) = ADP + phosphate + 5 H(+)(out). Its function is as follows. Produces ATP from ADP in the presence of a proton gradient across the membrane. The catalytic sites are hosted primarily by the beta subunits. The protein is ATP synthase subunit beta of Stutzerimonas stutzeri (strain A1501) (Pseudomonas stutzeri).